A 305-amino-acid polypeptide reads, in one-letter code: MKKIRCALIGSGNIGTDLIYKIQRSPVLEPVWMVGIDPESEGLARAREMGLKTTAAGVDGLLPHVLEDNIQIAFDATSAYVHAENSRKLNELGVMMIDLTPAAIGPLCVPPVNLKEHTEKLEMNVNMISCAGQATIPIVHAISRIQSVSYGEIVASLASKSIGPGTRANLDEFTYTTSNAIEIVGGARKGKALAIINPADPPMMMRNTISCLTDEEPDEPRIIESVLAMIKEVQKYVPGYRLVNGPLFDGKRVTVFMEVAGLGDYLPKYAGNLDIMTAAATRTAEMFAEEILAGTIQLKPVEMAV.

11–14 (SGNI) contributes to the NAD(+) binding site. The Acyl-thioester intermediate role is filled by Cys-130. Residues 161–169 (SIGPGTRAN) and Asn-272 each bind NAD(+).

The protein belongs to the acetaldehyde dehydrogenase family.

It catalyses the reaction acetaldehyde + NAD(+) + CoA = acetyl-CoA + NADH + H(+). The protein is Acetaldehyde dehydrogenase 5 of Dechloromonas aromatica (strain RCB).